A 127-amino-acid chain; its full sequence is Large ribosomal subunit protein eL8 (127 aa).

Belongs to the eukaryotic ribosomal protein eL8 family. Part of the 50S ribosomal subunit. Probably part of the RNase P complex.

Its subcellular location is the cytoplasm. In terms of biological role, multifunctional RNA-binding protein that recognizes the K-turn motif in ribosomal RNA, the RNA component of RNase P, box H/ACA, box C/D and box C'/D' sRNAs. The chain is Large ribosomal subunit protein eL8 from Hyperthermus butylicus (strain DSM 5456 / JCM 9403 / PLM1-5).